A 524-amino-acid chain; its full sequence is DEAD-box ATP-dependent RNA helicase CshA (524 aa).

The Q motif signature appears at 1–29 (MKFNELNLSADLLAEIEKAGFVEASPIQE). Residues 32-202 (IPLALEGKDV…VQFMKAPEHV (171 aa)) enclose the Helicase ATP-binding domain. An ATP-binding site is contributed by 45-52 (AQTGTGKT). The DEAD box motif lies at 150 to 153 (DEAD). The region spanning 213 to 373 (LVDQYYIRVK…GLKPASVEES (161 aa)) is the Helicase C-terminal domain. The interval 440-524 (EKPLPFKPSG…GFVIRNKGDK (85 aa)) is disordered. Over residues 463 to 498 (RRGDDRRERDRRGNGRRDEFKKGSRGNDRFDKEKRY) the composition is skewed to basic and acidic residues.

It belongs to the DEAD box helicase family. CshA subfamily. In terms of assembly, oligomerizes, may be a member of the RNA degradosome.

It is found in the cytoplasm. The catalysed reaction is ATP + H2O = ADP + phosphate + H(+). Its function is as follows. DEAD-box RNA helicase possibly involved in RNA degradation. Unwinds dsRNA in both 5'- and 3'-directions, has RNA-dependent ATPase activity. The sequence is that of DEAD-box ATP-dependent RNA helicase CshA from Streptococcus pneumoniae serotype 4 (strain ATCC BAA-334 / TIGR4).